A 601-amino-acid chain; its full sequence is Elongation factor 4 (601 aa).

Positions S5–E187 constitute a tr-type G domain. GTP is bound by residues D17–T22 and N134–D137.

Belongs to the TRAFAC class translation factor GTPase superfamily. Classic translation factor GTPase family. LepA subfamily.

It localises to the cell inner membrane. The enzyme catalyses GTP + H2O = GDP + phosphate + H(+). Required for accurate and efficient protein synthesis under certain stress conditions. May act as a fidelity factor of the translation reaction, by catalyzing a one-codon backward translocation of tRNAs on improperly translocated ribosomes. Back-translocation proceeds from a post-translocation (POST) complex to a pre-translocation (PRE) complex, thus giving elongation factor G a second chance to translocate the tRNAs correctly. Binds to ribosomes in a GTP-dependent manner. The sequence is that of Elongation factor 4 from Oleidesulfovibrio alaskensis (strain ATCC BAA-1058 / DSM 17464 / G20) (Desulfovibrio alaskensis).